Reading from the N-terminus, the 164-residue chain is UPF0304 protein ESA_00925 (164 aa).

It belongs to the UPF0304 family.

The protein is UPF0304 protein ESA_00925 of Cronobacter sakazakii (strain ATCC BAA-894) (Enterobacter sakazakii).